The following is a 550-amino-acid chain: Glucose-6-phosphate isomerase (550 aa).

Glutamate 356 (proton donor) is an active-site residue. Catalysis depends on residues histidine 387 and lysine 515.

Belongs to the GPI family.

The protein resides in the cytoplasm. It carries out the reaction alpha-D-glucose 6-phosphate = beta-D-fructose 6-phosphate. It participates in carbohydrate biosynthesis; gluconeogenesis. The protein operates within carbohydrate degradation; glycolysis; D-glyceraldehyde 3-phosphate and glycerone phosphate from D-glucose: step 2/4. In terms of biological role, catalyzes the reversible isomerization of glucose-6-phosphate to fructose-6-phosphate. This Vibrio atlanticus (strain LGP32) (Vibrio splendidus (strain Mel32)) protein is Glucose-6-phosphate isomerase.